The sequence spans 513 residues: V-type proton ATPase subunit B, kidney isoform (513 aa).

Arg-394 provides a ligand contact to ATP. The PDZ-binding motif lies at 510 to 513 (DTAL).

It belongs to the ATPase alpha/beta chains family. V-ATPase is a heteromultimeric enzyme made up of two complexes: the ATP-hydrolytic V1 complex and the proton translocation V0 complex. The V1 complex consists of three catalytic AB heterodimers that form a heterohexamer, three peripheral stalks each consisting of EG heterodimers, one central rotor including subunits D and F, and the regulatory subunits C and H. The proton translocation complex V0 consists of the proton transport subunit a, a ring of proteolipid subunits c9c'', rotary subunit d, subunits e and f, and the accessory subunits ATP6AP1/Ac45 and ATP6AP2/PRR. Forms a complex with NHERF1 and SCL4A7. As to expression, kidney; localizes to early distal nephron, encompassing thick ascending limbs and distal convoluted tubules (at protein level). Expressed in the cochlea and endolymphatic sac.

It is found in the apical cell membrane. Its subcellular location is the basolateral cell membrane. Its function is as follows. Non-catalytic subunit of the V1 complex of vacuolar(H+)-ATPase (V-ATPase), a multisubunit enzyme composed of a peripheral complex (V1) that hydrolyzes ATP and a membrane integral complex (V0) that translocates protons. V-ATPase is responsible for acidifying and maintaining the pH of intracellular compartments and in some cell types, is targeted to the plasma membrane, where it is responsible for acidifying the extracellular environment. Essential for the proper assembly and activity of V-ATPase. In renal intercalated cells, mediates secretion of protons (H+) into the urine thereby ensuring correct urinary acidification. Required for optimal olfactory function by mediating the acidification of the nasal olfactory epithelium. The chain is V-type proton ATPase subunit B, kidney isoform (ATP6V1B1) from Homo sapiens (Human).